Consider the following 166-residue polypeptide: MAAAVLRAALQDWRSCLGRSYGRRKLSQTQGPPDNPGFVESVDEYQFVERLLPPTKIPEPPKHKHYPTPSGWQPPRDPLPSLPYFVRRSRMHNIPVYKEITHGNRQMTLIRKVEGDIWALQKDVEEFLSPLLGKTPITQVNEVTGTLRIKGYFDEQLKAWLLEKGF.

The segment at 54-77 is disordered; the sequence is PTKIPEPPKHKHYPTPSGWQPPRD.

It belongs to the mitochondrion-specific ribosomal protein mL49 family. Component of the mitochondrial ribosome large subunit (39S) which comprises a 16S rRNA and about 50 distinct proteins. Interacts with OXA1L.

The protein resides in the mitochondrion. The chain is Large ribosomal subunit protein mL49 (Mrpl49) from Mus musculus (Mouse).